We begin with the raw amino-acid sequence, 206 residues long: MARYTGAVCRLCRREGLKLFLKGDRCYTDKCAFTRRGYAPGVHGQSRKKISNYGLQLREKQKAKRIYGVLEKQFRIYYKRAERIKGISGENLLKLLELRLDNVAYKLGYGSSRKEARQLVTHGHFLVNGKKVDIPSYTLKVNEVVSVSEKSRGTEKFKTFAENPKTLPAWIEANYDNFEAKIVAEPNREDIDTPIKETLIVELYSK.

The 67-residue stretch at 98 to 164 folds into the S4 RNA-binding domain; the sequence is LRLDNVAYKL…EKFKTFAENP (67 aa).

The protein belongs to the universal ribosomal protein uS4 family. As to quaternary structure, part of the 30S ribosomal subunit. Contacts protein S5. The interaction surface between S4 and S5 is involved in control of translational fidelity.

Functionally, one of the primary rRNA binding proteins, it binds directly to 16S rRNA where it nucleates assembly of the body of the 30S subunit. Its function is as follows. With S5 and S12 plays an important role in translational accuracy. This is Small ribosomal subunit protein uS4A (rspD1) from Clostridium acetobutylicum (strain ATCC 824 / DSM 792 / JCM 1419 / IAM 19013 / LMG 5710 / NBRC 13948 / NRRL B-527 / VKM B-1787 / 2291 / W).